Reading from the N-terminus, the 222-residue chain is Superoxide dismutase [Mn], mitochondrial (222 aa).

The N-terminal 24 residues, 1–24 (MLSRAVCGTGRQLAPALGYLGSRQ), are a transit peptide targeting the mitochondrion. Residue H50 coordinates Mn(2+). Y58 is subject to 3'-nitrotyrosine. N6-acetyllysine; alternate is present on residues K68 and K75. N6-succinyllysine; alternate is present on residues K68 and K75. H98 contributes to the Mn(2+) binding site. K114 carries the post-translational modification N6-acetyllysine. An N6-acetyllysine; alternate mark is found at K122 and K130. N6-succinyllysine; alternate occurs at positions 122 and 130. Mn(2+) is bound by residues D183 and H187. K202 bears the N6-acetyllysine mark.

The protein belongs to the iron/manganese superoxide dismutase family. Homotetramer. Requires Mn(2+) as cofactor. Nitrated under oxidative stress. Nitration coupled with oxidation inhibits the catalytic activity. In terms of processing, acetylation at Lys-122 decreases enzymatic activity. Deacetylated by SIRT3 upon exposure to ionizing radiations or after long fasting. Post-translationally, polyubiquitinated; leading to proteasomal degradation. Deubiquitinated by USP36 which increases protein stability.

Its subcellular location is the mitochondrion matrix. It carries out the reaction 2 superoxide + 2 H(+) = H2O2 + O2. In terms of biological role, destroys superoxide anion radicals which are normally produced within the cells and which are toxic to biological systems. In Macaca fascicularis (Crab-eating macaque), this protein is Superoxide dismutase [Mn], mitochondrial (SOD2).